The chain runs to 300 residues: Protease HtpX (300 aa).

2 consecutive transmembrane segments (helical) span residues 4–24 (ILLF…TLRL) and 40–60 (SLLI…LFIS). H145 is a binding site for Zn(2+). E146 is a catalytic residue. H149 is a Zn(2+) binding site. A run of 2 helical transmembrane segments spans residues 153–173 (GDMV…MFFA) and 193–213 (LGFF…GLVA). E225 provides a ligand contact to Zn(2+).

Belongs to the peptidase M48B family. Zn(2+) serves as cofactor.

The protein resides in the cell inner membrane. In Chromohalobacter salexigens (strain ATCC BAA-138 / DSM 3043 / CIP 106854 / NCIMB 13768 / 1H11), this protein is Protease HtpX.